A 33-amino-acid polypeptide reads, in one-letter code: Alpha-amanitin proprotein (33 aa).

Positions 1–10 (MSDINATRLP) are excised as a propeptide. Residue isoleucine 11 is modified to (3R,4R)-4,5-dihydroxyisoleucine; in form alpha-amanitin. Isoleucine 11 carries the (3R,4S)-4-hydroxyisoleucine; in form gamma-amanitin modification. Residues 11-18 (IWGIGCNP) constitute a cross-link (cyclopeptide (Ile-Pro)). A cross-link (2'-cysteinyl-6'-hydroxytryptophan sulfoxide (Trp-Cys)) is located at residues 12–16 (WGIGC). At proline 18 the chain carries 4-hydroxyproline. Positions 19–33 (SVGDEVTALLTSGEA) are excised as a propeptide.

Belongs to the MSDIN fungal toxin family. Processed by the macrocyclase-peptidase enzyme POPB to yield a toxic cyclic decapeptide. POPB first removes 10 residues from the N-terminus. Conformational trapping of the remaining peptide forces the enzyme to release this intermediate rather than proceed to macrocyclization. The enzyme rebinds the remaining peptide in a different conformation and catalyzes macrocyclization of the N-terminal 8 residues.

Functionally, major toxin belonging to the bicyclic octapeptides amatoxins that acts by binding non-competitively to RNA polymerase II and greatly slowing the elongation of transcripts from target promoters. This Amanita fuliginea (East Asian brown death cap) protein is Alpha-amanitin proprotein.